Consider the following 157-residue polypeptide: Protein FAM162B (157 aa).

Residues 104 to 123 (ACYIMIGLTIVACFAVIVSA) form a helical membrane-spanning segment.

This sequence belongs to the UPF0389 family.

Its subcellular location is the membrane. The protein is Protein FAM162B (Fam162b) of Mus musculus (Mouse).